We begin with the raw amino-acid sequence, 292 residues long: Histamine N-methyltransferase (292 aa).

Glutamate 28 contacts substrate. Residues glycine 60, glutamate 89, glutamine 94, serine 120, and isoleucine 142 each contribute to the S-adenosyl-L-methionine site. Asparagine 283 contacts substrate.

It belongs to the class I-like SAM-binding methyltransferase superfamily. HNMT family. Monomer. In terms of tissue distribution, expressed in jejunum, brain &gt; lung, spleen, stomach &gt; liver, kidney.

Its subcellular location is the cytoplasm. It catalyses the reaction histamine + S-adenosyl-L-methionine = N(tau)-methylhistamine + S-adenosyl-L-homocysteine + H(+). Its function is as follows. Inactivates histamine by N-methylation. Plays an important role in degrading histamine and in regulating the airway response to histamine. This chain is Histamine N-methyltransferase (HNMT), found in Cavia porcellus (Guinea pig).